The sequence spans 730 residues: Elongation factor 2 (730 aa).

Residues Asp-19–Tyr-229 form the tr-type G domain. GTP is bound by residues Ala-28–Thr-35, Asp-94–His-98, and Asn-148–Asp-151. Residue His-597 is modified to Diphthamide.

This sequence belongs to the TRAFAC class translation factor GTPase superfamily. Classic translation factor GTPase family. EF-G/EF-2 subfamily.

It is found in the cytoplasm. Functionally, catalyzes the GTP-dependent ribosomal translocation step during translation elongation. During this step, the ribosome changes from the pre-translocational (PRE) to the post-translocational (POST) state as the newly formed A-site-bound peptidyl-tRNA and P-site-bound deacylated tRNA move to the P and E sites, respectively. Catalyzes the coordinated movement of the two tRNA molecules, the mRNA and conformational changes in the ribosome. In Methanosphaera stadtmanae (strain ATCC 43021 / DSM 3091 / JCM 11832 / MCB-3), this protein is Elongation factor 2.